A 351-amino-acid polypeptide reads, in one-letter code: DNA beta-glucosyltransferase (351 aa).

Monomer.

The catalysed reaction is Transfers a beta-D-glucosyl residue from UDP-alpha-D-glucose to a hydroxymethylcytosine residue in DNA.. It functions in the pathway genetic information processing; DNA modification. Catalyzes the transfer of glucose from uridine diphosphoglucose to 5-hydroxymethyl cytosine of T4 DNA to yield glucosyl 5-hydroxymethyl cytosine (glc-HMC). This DNA process seems to occur immediately after DNA synthesis since the DNA alpha-glucosyltransferase interacts with the clamp protein gp45. The glc-HMC modification protects the phage genome against its own nucleases and the host restriction endonuclease system. The glc-HMC modification also protects against the host CRISPR-Cas9 defense system. The polypeptide is DNA beta-glucosyltransferase (bgt) (Enterobacteria phage T4 (Bacteriophage T4)).